The primary structure comprises 374 residues: Tomoregulin-2 (374 aa).

A signal peptide spans 1 to 40; sequence MVLWESPRQCSSWTLCEGFCWLLLLPVTLLIIARPVKLAA. The Extracellular portion of the chain corresponds to 41 to 320; sequence FPTSLSDCQT…VPGPVRFQYV (280 aa). Residue asparagine 55 is glycosylated (N-linked (GlcNAc...) asparagine). 2 Kazal-like domains span residues 90–137 and 181–229; these read VCQF…SCAT and VCNI…RCQD. 6 disulfides stabilise this stretch: cysteine 91-cysteine 121, cysteine 95-cysteine 114, cysteine 103-cysteine 135, cysteine 182-cysteine 213, cysteine 186-cysteine 206, and cysteine 195-cysteine 227. Residue asparagine 230 is glycosylated (N-linked (GlcNAc...) asparagine). Residues 261-301 form the EGF-like domain; it reads HHIPCPEHYNGFCMHGKCEHSINMQEPSCRCDAGYTGQHCE. Disulfide bonds link cysteine 265–cysteine 278, cysteine 273–cysteine 289, and cysteine 291–cysteine 300. The interval 303–320 is required for shedding; the sequence is KDYSVLYVVPGPVRFQYV. Residues 321 to 341 form a helical membrane-spanning segment; it reads LIAAVIGTIQIAVICVVVLCI. The Cytoplasmic portion of the chain corresponds to 342-374; sequence TRKCPRSNRIHRQKQNTGHYSSDNTTRASTRLI. The segment at 353–374 is disordered; the sequence is RQKQNTGHYSSDNTTRASTRLI. A compositionally biased stretch (polar residues) spans 356 to 374; sequence QNTGHYSSDNTTRASTRLI.

It belongs to the tomoregulin family. O-glycosylated; contains chondroitin sulfate glycosaminoglycans. Post-translationally, a soluble form (TMEFF2-ECD) is produced by proteolytic shedding. This shedding can be induced by phorbol ester or pro-inflammatory cytokines such as TNFalpha, and is mediated by a metalloproteinase ADAM. Widely expressed in the brain. In the olfactory bulb expressed in mitral cell, granule, and glomerular layers. In the hippocampus expressed in hippocampal cornu ammonis, pyramidal layer, dentate gyrus, and substantia nigra pars compacta.

Its subcellular location is the membrane. May be a survival factor for hippocampal and mesencephalic neurons. The shedded form may up-regulate cell proliferation. The polypeptide is Tomoregulin-2 (Tmeff2) (Mus musculus (Mouse)).